Consider the following 279-residue polypeptide: 2-dehydro-3-deoxyphosphooctonate aldolase (279 aa).

The protein belongs to the KdsA family.

It is found in the cytoplasm. It catalyses the reaction D-arabinose 5-phosphate + phosphoenolpyruvate + H2O = 3-deoxy-alpha-D-manno-2-octulosonate-8-phosphate + phosphate. The protein operates within carbohydrate biosynthesis; 3-deoxy-D-manno-octulosonate biosynthesis; 3-deoxy-D-manno-octulosonate from D-ribulose 5-phosphate: step 2/3. It participates in bacterial outer membrane biogenesis; lipopolysaccharide biosynthesis. The chain is 2-dehydro-3-deoxyphosphooctonate aldolase from Bartonella henselae (strain ATCC 49882 / DSM 28221 / CCUG 30454 / Houston 1) (Rochalimaea henselae).